A 226-amino-acid polypeptide reads, in one-letter code: Large ribosomal subunit protein uL1 (226 aa).

It belongs to the universal ribosomal protein uL1 family. Part of the 50S ribosomal subunit.

In terms of biological role, binds directly to 23S rRNA. Probably involved in E site tRNA release. Its function is as follows. Protein L1 is also a translational repressor protein, it controls the translation of its operon by binding to its mRNA. This is Large ribosomal subunit protein uL1 from Korarchaeum cryptofilum (strain OPF8).